The chain runs to 154 residues: Small ribosomal subunit protein bS6 (154 aa).

Positions 107 to 154 (KSDDRERGFRGPKPPGRFESGRKRGYDDREEFRARAGGDDDDRGLDQE) are disordered. Over residues 125–154 (ESGRKRGYDDREEFRARAGGDDDDRGLDQE) the composition is skewed to basic and acidic residues.

Belongs to the bacterial ribosomal protein bS6 family.

Functionally, binds together with bS18 to 16S ribosomal RNA. The sequence is that of Small ribosomal subunit protein bS6 from Granulibacter bethesdensis (strain ATCC BAA-1260 / CGDNIH1).